Reading from the N-terminus, the 192-residue chain is MSKEEFPHEKDLKDEVTPDKAPKKDPKAAPKEEVKENPVENYEKEIAELTAKNKDLEDKYLRSEAEIQNMQARYAKERAQLIKYESQSLAKEVLPAMDNLERALAVKADDEAAKQLQKGVQMTLDSLVKSMKDQGITEIKAEGETFDPSLHQAVQTVAAENDERKDRVVKVLQKGYQYKDRTLRPAMVVVAQ.

The tract at residues 1 to 41 (MSKEEFPHEKDLKDEVTPDKAPKKDPKAAPKEEVKENPVEN) is disordered.

This sequence belongs to the GrpE family. In terms of assembly, homodimer.

The protein localises to the cytoplasm. Its function is as follows. Participates actively in the response to hyperosmotic and heat shock by preventing the aggregation of stress-denatured proteins, in association with DnaK and GrpE. It is the nucleotide exchange factor for DnaK and may function as a thermosensor. Unfolded proteins bind initially to DnaJ; upon interaction with the DnaJ-bound protein, DnaK hydrolyzes its bound ATP, resulting in the formation of a stable complex. GrpE releases ADP from DnaK; ATP binding to DnaK triggers the release of the substrate protein, thus completing the reaction cycle. Several rounds of ATP-dependent interactions between DnaJ, DnaK and GrpE are required for fully efficient folding. The protein is Protein GrpE of Lactobacillus johnsonii (strain CNCM I-12250 / La1 / NCC 533).